The following is a 453-amino-acid chain: Indoleamine 2,3-dioxygenase (453 aa).

His331 serves as a coordination point for heme.

This sequence belongs to the indoleamine 2,3-dioxygenase family. Heme is required as a cofactor.

The catalysed reaction is D-tryptophan + O2 = N-formyl-D-kynurenine. The enzyme catalyses L-tryptophan + O2 = N-formyl-L-kynurenine. It participates in cofactor biosynthesis; NAD(+) biosynthesis. Catalyzes the first step in tryptophan catabolism in order to supply de novo nicotinamide adenine dinucleotide (NAD(+)) via the kynurenine pathway. Plays a role in the cellular response to telomere uncapping. This is Indoleamine 2,3-dioxygenase (BNA2) from Saccharomyces cerevisiae (strain ATCC 204508 / S288c) (Baker's yeast).